Consider the following 428-residue polypeptide: Adenylosuccinate synthetase (428 aa).

GTP is bound by residues 12–18 and 40–42; these read GDEGKGK and GHT. Asp13 (proton acceptor) is an active-site residue. Asp13 and Gly40 together coordinate Mg(2+). IMP contacts are provided by residues 13 to 16, 38 to 41, Thr128, Arg142, Gln223, Thr238, and Arg302; these read DEGK and NAGH. His41 serves as the catalytic Proton donor. A substrate-binding site is contributed by 298-304; sequence TTTGRPR. GTP is bound by residues Arg304, 330–332, and 412–414; these read SID and SVG.

The protein belongs to the adenylosuccinate synthetase family. Homodimer. Mg(2+) serves as cofactor.

The protein resides in the cytoplasm. The catalysed reaction is IMP + L-aspartate + GTP = N(6)-(1,2-dicarboxyethyl)-AMP + GDP + phosphate + 2 H(+). The protein operates within purine metabolism; AMP biosynthesis via de novo pathway; AMP from IMP: step 1/2. Its function is as follows. Plays an important role in the de novo pathway of purine nucleotide biosynthesis. Catalyzes the first committed step in the biosynthesis of AMP from IMP. The sequence is that of Adenylosuccinate synthetase from Geobacillus sp. (strain WCH70).